We begin with the raw amino-acid sequence, 230 residues long: Protein CWC15 homolog B (230 aa).

Residues 1–126 (MTTAARPTFE…DEDSDDDTAA (126 aa)) are disordered. A compositionally biased stretch (polar residues) spans 22–34 (DLSQLSKQYSSRD). Residues 52 to 84 (EEVRSRDFRRELEERERVAVRDKNRDRPTREHT) show a composition bias toward basic and acidic residues. Positions 102-124 (DADDPLTDEDADEDSDEDSDDDT) are enriched in acidic residues. Residues 121 to 165 (DDDTAALLAELEKIKKERAEEQVRKELEQKAEEERIRMENILSGN) are a coiled coil.

The protein belongs to the CWC15 family. As to quaternary structure, identified in the spliceosome C complex. Component of the minor spliceosome, which splices U12-type introns.

It is found in the nucleus. Functionally, involved in pre-mRNA splicing as component of the spliceosome. This Xenopus laevis (African clawed frog) protein is Protein CWC15 homolog B (cwc15-b).